We begin with the raw amino-acid sequence, 280 residues long: DegV domain-containing protein SPy_1698/M5005_Spy1391 (280 aa).

Residues 3–280 enclose the DegV domain; that stretch reads WKIVTDSGCD…DGGLLMGYEI (278 aa). Hexadecanoate is bound by residues Ser63 and Ser91.

May bind long-chain fatty acids, such as palmitate, and may play a role in lipid transport or fatty acid metabolism. In Streptococcus pyogenes serotype M1, this protein is DegV domain-containing protein SPy_1698/M5005_Spy1391.